Here is a 501-residue protein sequence, read N- to C-terminus: Acetylcholine receptor subunit beta (501 aa).

The first 23 residues, 1 to 23 (MALGALLLILGILGTPLAPGARG), serve as a signal peptide directing secretion. The Extracellular segment spans residues 24 to 244 (SEAEGQLLKK…VIFYLIIRRK (221 aa)). C151 and C165 form a disulfide bridge. N164 carries N-linked (GlcNAc...) asparagine glycosylation. A run of 3 helical transmembrane segments spans residues 245–269 (PLFYLVNVIAPCILITLLAIFVFYL), 277–295 (MGLSIFALLTLTVFLLLLA), and 311–332 (YLMFTMILVTFSVILSVVVLNL). Topologically, residues 333-469 (HHRSPHTHQM…WQFVAMVVDR (137 aa)) are cytoplasmic. Positions 362 to 381 (RPKPERDQLPEPHHSFSPRS) are disordered. Residues 363–375 (PKPERDQLPEPHH) are compositionally biased toward basic and acidic residues. Y390 is modified (phosphotyrosine; by Tyr-kinases). The helical transmembrane segment at 470 to 488 (LFLWTFIVFTSVGTLVIFL) threads the bilayer.

The protein belongs to the ligand-gated ion channel (TC 1.A.9) family. Acetylcholine receptor (TC 1.A.9.1) subfamily. Beta-1/CHRNB1 sub-subfamily. As to quaternary structure, pentamer of two alpha chains, and one each of the beta, delta, and gamma (in immature muscle) or epsilon (in mature muscle) chains. The muscle heteropentamer composed of alpha-1, beta-1, delta, epsilon subunits interacts with the alpha-conotoxin ImII.

It localises to the postsynaptic cell membrane. Its subcellular location is the cell membrane. It catalyses the reaction K(+)(in) = K(+)(out). The enzyme catalyses Na(+)(in) = Na(+)(out). After binding acetylcholine, the AChR responds by an extensive change in conformation that affects all subunits and leads to opening of an ion-conducting channel across the plasma membrane. This chain is Acetylcholine receptor subunit beta (Chrnb1), found in Rattus norvegicus (Rat).